Here is a 258-residue protein sequence, read N- to C-terminus: MKISQIEKKKHLYLIKLDNGDNLTVTEDTIIRFMLSKHMVIDSQQWEDIKSFAQFSYGKSKALGFIAFQQRSQKQVQDYLLKHQISPDLIPSIIDSLKQGKWIDDQQYVDTYVRQNSLTGDKGPLLLKQKLMLKGIASQLIEPVLAQTDFSSIAQKAAEKIYQKYQHKLPSKALTDKIIQGLLNKGFSYDLAKGIVSQLSLEQDSQHIEDLLDQEFDKLLRKYSRRYDGYQLKQKLYQALYRKGYDSDDITTKLNDYF.

This sequence belongs to the RecX family.

It is found in the cytoplasm. In terms of biological role, modulates RecA activity. This Streptococcus equi subsp. zooepidemicus (strain MGCS10565) protein is Regulatory protein RecX.